A 61-amino-acid polypeptide reads, in one-letter code: DNA-directed RNA polymerase subunit Rpo6 (61 aa).

It belongs to the archaeal Rpo6/eukaryotic RPB6 RNA polymerase subunit family. As to quaternary structure, part of the RNA polymerase complex.

The protein localises to the cytoplasm. It carries out the reaction RNA(n) + a ribonucleoside 5'-triphosphate = RNA(n+1) + diphosphate. DNA-dependent RNA polymerase (RNAP) catalyzes the transcription of DNA into RNA using the four ribonucleoside triphosphates as substrates. This Methanothermobacter thermautotrophicus (strain ATCC 29096 / DSM 1053 / JCM 10044 / NBRC 100330 / Delta H) (Methanobacterium thermoautotrophicum) protein is DNA-directed RNA polymerase subunit Rpo6.